The following is a 276-amino-acid chain: Omega-amidase NIT2-A (276 aa).

Residues 4-248 (FKLSLVQFLV…ETVLSAEIDL (245 aa)) form the CN hydrolase domain. Glu43 functions as the Proton acceptor in the catalytic mechanism. Residue Lys112 is the Proton donor of the active site. Cys153 serves as the catalytic Nucleophile.

The protein belongs to the carbon-nitrogen hydrolase superfamily. NIT1/NIT2 family. In terms of assembly, homodimer.

Its subcellular location is the cytoplasm. It carries out the reaction 2-oxoglutaramate + H2O = 2-oxoglutarate + NH4(+). The catalysed reaction is 2-oxosuccinamate + H2O = oxaloacetate + NH4(+). Has omega-amidase activity. The role of omega-amidase is to remove potentially toxic intermediates by converting 2-oxoglutaramate and 2-oxosuccinamate to biologically useful 2-oxoglutarate and oxaloacetate, respectively. This is Omega-amidase NIT2-A (nit2a) from Xenopus laevis (African clawed frog).